The sequence spans 123 residues: MDVFKKGFSIAKEGVVGAVEKTKQGVTEAAEKTKEGVMYVGTKTKENVVQSVTSVAEKTKEQANAVSEAVVSSVNTVANKTVEEAENIVVTTGVVRKEDLEPPAQDQEAKEQEENEEAKSGED.

Repeat copies occupy residues E20 to A30 and E31 to G41. The segment at E20 to S67 is 4 X 11 AA tandem repeats of [EGSA]-K-T-K-[EQ]-[GQ]-V-X(4). Residues T42–A56 form a 3; approximate repeat. Copy 4 of the repeat occupies E57–S67. Residues S67 and S72 each carry the phosphoserine modification. Residues T91–D123 form a disordered region. The span at Q107–D123 shows a compositional bias: basic and acidic residues. S120 carries the phosphoserine; by BARK1, CaMK2 and CK2 modification.

Belongs to the synuclein family. May be a centrosome-associated protein. Interacts with MYOC; affects its secretion and its aggregation. In terms of processing, phosphorylated. Phosphorylation by GRK5 appears to occur on residues distinct from the residue phosphorylated by other kinases. In terms of tissue distribution, highly expressed in brain, particularly in the substantia nigra. Also expressed in the corpus callosum, heart, skeletal muscle, ovary, testis, colon and spleen. Weak expression in pancreas, kidney and lung. Expressed predominantly in the cell bodies and axons of primary sensory neurons, sympathetic neurons and motoneurons.

Its subcellular location is the cytoplasm. It localises to the perinuclear region. The protein resides in the cytoskeleton. It is found in the microtubule organizing center. The protein localises to the centrosome. Its subcellular location is the spindle. Its function is as follows. Plays a role in neurofilament network integrity. May be involved in modulating axonal architecture during development and in the adult. In vitro, increases the susceptibility of neurofilament-H to calcium-dependent proteases. May also function in modulating the keratin network in skin. Activates the MAPK and Elk-1 signal transduction pathway. The chain is Gamma-synuclein (Sncg) from Mus musculus (Mouse).